The sequence spans 535 residues: Pre-mRNA-splicing factor SLU7-A (535 aa).

A disordered region spans residues 21–44 (EEARKAGLAPAEVDEDGKEINPHI). The segment at 96-109 (CQNCGAMTHTAKAC) adopts a CCHC-type zinc-finger fold. Positions 176-190 (LKKLEEKNNNEKGDD) are enriched in basic and acidic residues. 2 disordered regions span residues 176 to 204 (LKKL…DLRV) and 489 to 508 (EDLS…NVKY). Residues 191-203 (ANSDGEEDEDDLR) show a composition bias toward acidic residues. A Phosphoserine modification is found at Ser193. A Nuclear localization signal motif is present at residues 486 to 493 (LKKEDLSR). Residues 489–501 (EDLSRREEKDERK) show a composition bias toward basic and acidic residues.

The protein belongs to the SLU7 family. In terms of tissue distribution, mainly expressed in tissues undergoing cell proliferation, particularly in lateral organs.

The protein localises to the nucleus. Its function is as follows. Participates in the second catalytic step of pre-mRNA splicing, when the free hydroxyl group of exon I attacks the 3'-splice site to generate spliced mRNA and the excised lariat intron. Together with SMP2, involved in the timing of cell cycle arrest during leaf development, in a STRUWWELPETER (SWP) dependent manner; promotes cell proliferation in developing organs. This is Pre-mRNA-splicing factor SLU7-A from Arabidopsis thaliana (Mouse-ear cress).